We begin with the raw amino-acid sequence, 257 residues long: Mediator of RNA polymerase II transcription subunit 7 (257 aa).

A disordered region spans residues 33 to 74 (EWQRQQNDEEIETKQEEADDKDEKDNEKQNETQDTVPPGELR). The span at 44 to 63 (ETKQEEADDKDEKDNEKQNE) shows a compositional bias: basic and acidic residues.

Belongs to the Mediator complex subunit 7 family. As to quaternary structure, component of the Mediator complex.

It is found in the nucleus. Its function is as follows. Component of the Mediator complex, a coactivator involved in the regulated transcription of nearly all RNA polymerase II-dependent genes. Mediator functions as a bridge to convey information from gene-specific regulatory proteins to the basal RNA polymerase II transcription machinery. Mediator is recruited to promoters by direct interactions with regulatory proteins and serves as a scaffold for the assembly of a functional preinitiation complex with RNA polymerase II and the general transcription factors. The protein is Mediator of RNA polymerase II transcription subunit 7 (MED7) of Scheffersomyces stipitis (strain ATCC 58785 / CBS 6054 / NBRC 10063 / NRRL Y-11545) (Yeast).